The following is a 473-amino-acid chain: Suppressor of SWI4 1 homolog (473 aa).

A Brix domain is found at 29–292 (PHSFVFTRGC…LIKVQEGVGE (264 aa)). Phosphoserine occurs at positions 238 and 240. The disordered stretch occupies residues 323 to 473 (AQRQAQQAQN…GRGRPGKRVA (151 aa)). Residues 324–334 (QRQAQQAQNVQ) show a composition bias toward low complexity. Residues 335–352 (RKQEQREAHRKKSLEGMK) show a composition bias toward basic and acidic residues. Position 359 is a phosphoserine (Ser-359). Residues 375–388 (LGEDDDEQEDDDIE) are compositionally biased toward acidic residues. A compositionally biased stretch (basic residues) spans 409–421 (KRLAKSPGRKRKR). Positions 422-443 (WEMDRGRGRLCDQKFPKTKDKS) are enriched in basic and acidic residues. Position 438 is an N6-acetyllysine (Lys-438). Over residues 462–473 (GRGRGRPGKRVA) the composition is skewed to basic residues.

As to expression, widely expressed.

It localises to the nucleus. The protein localises to the nucleolus. May have a role in cell growth. This chain is Suppressor of SWI4 1 homolog (PPAN), found in Homo sapiens (Human).